The chain runs to 283 residues: Shikimate dehydrogenase (NADP(+)) (283 aa).

Residues 18–20 and Thr-66 each bind shikimate; that span reads SYS. Catalysis depends on Lys-70, which acts as the Proton acceptor. Asn-91 and Asp-106 together coordinate shikimate. Residues 130–134 and Met-225 each bind NADP(+); that span reads GAGGA. Tyr-227 contributes to the shikimate binding site. Gly-248 provides a ligand contact to NADP(+).

The protein belongs to the shikimate dehydrogenase family. In terms of assembly, homodimer.

It catalyses the reaction shikimate + NADP(+) = 3-dehydroshikimate + NADPH + H(+). Its pathway is metabolic intermediate biosynthesis; chorismate biosynthesis; chorismate from D-erythrose 4-phosphate and phosphoenolpyruvate: step 4/7. Functionally, involved in the biosynthesis of the chorismate, which leads to the biosynthesis of aromatic amino acids. Catalyzes the reversible NADPH linked reduction of 3-dehydroshikimate (DHSA) to yield shikimate (SA). The sequence is that of Shikimate dehydrogenase (NADP(+)) from Pelodictyon phaeoclathratiforme (strain DSM 5477 / BU-1).